The sequence spans 248 residues: Protein-lysine N-methyltransferase EFM5 (248 aa).

This sequence belongs to the class I-like SAM-binding methyltransferase superfamily. EFM5 family.

The protein localises to the cytoplasm. In terms of biological role, S-adenosyl-L-methionine-dependent protein-lysine N-methyltransferase that trimethylates elongation factor 1-alpha (TEF1 and TEF2) at 'Lys-79'. Required for replication of Brome mosaic virus (BMV). The polypeptide is Protein-lysine N-methyltransferase EFM5 (Saccharomyces cerevisiae (strain ATCC 204508 / S288c) (Baker's yeast)).